We begin with the raw amino-acid sequence, 472 residues long: Flotillin-like protein 6 (472 aa).

Cysteine 37 carries S-palmitoyl cysteine lipidation. Positions 237 to 327 (ENQREAEVAQ…ELYKKQKEAE (91 aa)) form a coiled coil.

This sequence belongs to the band 7/mec-2 family. Flotillin subfamily. May be palmitoylated. In terms of tissue distribution, very low occasional expression in roots and nodules.

Its subcellular location is the cell membrane. The protein resides in the membrane. The protein localises to the caveola. Its function is as follows. May act as a scaffolding protein within caveolar membranes, functionally participating in formation of caveolae or caveolae-like vesicles. May be involved in nodule formation. The protein is Flotillin-like protein 6 (FLOT6) of Medicago truncatula (Barrel medic).